The primary structure comprises 55 residues: Neurotoxin X-29S (55 aa).

The signal sequence occupies residues 1 to 23; the sequence is MKIFFAVLVILVLFSMLIWTAYG. 3 disulfides stabilise this stretch: Cys-30-Cys-45, Cys-36-Cys-50, and Cys-39-Cys-53.

Expressed by the venom gland.

It localises to the secreted. The sequence is that of Neurotoxin X-29S from Olivierus martensii (Manchurian scorpion).